The chain runs to 273 residues: Testis-specific serine/threonine-protein kinase 6 (273 aa).

One can recognise a Protein kinase domain in the interval 12–267; it reads YKLGRTIGEG…AGQVARNGWL (256 aa). ATP is bound by residues 18–26 and Lys-41; that span reads IGEGSYSKV. Asp-135 serves as the catalytic Proton acceptor.

The protein belongs to the protein kinase superfamily. CAMK Ser/Thr protein kinase family. In terms of assembly, microtubule inner protein component of sperm flagellar doublet microtubules. Interacts with HSP90; this interaction stabilizes and activates TSSK6. Interacts with the heat shock proteins HSPCB, HSPA8 and HSPA1A. These interactions appear to be required for TSSK6 kinase activity. Interacts with TSACC; this interaction is direct and recruits TSACC to HSP90, which is essential for kinase activity. Mg(2+) serves as cofactor. In terms of processing, autophosphorylated. Post-translationally, ubiquitinated; HSP90 activity negatively regulates ubiquitination and degradation. As to expression, expressed in the testis, localized to the heads of elongating spermatids.

It is found in the cytoplasm. Its subcellular location is the cytoskeleton. The protein localises to the flagellum axoneme. The protein resides in the nucleus. The enzyme catalyses L-seryl-[protein] + ATP = O-phospho-L-seryl-[protein] + ADP + H(+). The catalysed reaction is L-threonyl-[protein] + ATP = O-phospho-L-threonyl-[protein] + ADP + H(+). Serine/threonine-protein kinase component of the sperm flagellar doublet microtubules. May act as a regulator of sperm motility by mediating phosphorylation of sperm doublet microtubule proteins. Plays a role in DNA condensation during postmeiotic chromatin remodeling and histone-to-protamine transition during spermatogenesis. This is Testis-specific serine/threonine-protein kinase 6 from Mus musculus (Mouse).